The following is a 545-amino-acid chain: MSIFIGGAWPYANGSLHIGHAAALLPGDILARYYRQKGEEVLYVSGSDCNGTPISIRAKKENKSVKEIADFYHKEFKETFEKLGFTYDLYSRTDSPLHHEIVQELFLQLYEKKFLYTKKIKQLYCTFDNQFLPDRFVEGKCPNCGTHSRGDQCDNCSAILDPIDLVDKRCSICSNEPEVRETEHFYYVFSEFQNLLETYLNDAEETVRWRKNAINLTKRYLREGLPDRAVTRDLPNGIPVPIDGFRDKKIYVWFEAVAGYYTASVDWAQKLQNNITDFWNNRTKSYYVHGKDNIPFHTIIWPAILSGLEIEPLPEYIISSEYLTLENKKISTSNNWAIWLNDIIKKYDADSIRYFLTINAPEMKDANFSWREFIYSHNSELLGSYGNFINRTLKFIEKYFESEIPTKYLEGEILYNLKELYTTVGNLVESGHMKQALEEIFEYIRSANKFYDDMKPWALRESDIEKCKEVLATCVIIILNLGQMLNPFIPFSGKKIEDMFKTKLNTWNYISNLPNKLSDVSMLFDRIDLKKIDEEVLELQQTSSR.

Residues 10-20 carry the 'HIGH' region motif; the sequence is PYANGSLHIGH. Zn(2+)-binding residues include Cys141, Cys144, Cys153, and Cys156. A 'KMSKS' region motif is present at residues 329 to 333; that stretch reads KISTS. Thr332 serves as a coordination point for ATP.

It belongs to the class-I aminoacyl-tRNA synthetase family. MetG type 1 subfamily. In terms of assembly, monomer. Zn(2+) is required as a cofactor.

It is found in the cytoplasm. The enzyme catalyses tRNA(Met) + L-methionine + ATP = L-methionyl-tRNA(Met) + AMP + diphosphate. Its function is as follows. Is required not only for elongation of protein synthesis but also for the initiation of all mRNA translation through initiator tRNA(fMet) aminoacylation. The polypeptide is Methionine--tRNA ligase (Streptococcus pneumoniae (strain 70585)).